The chain runs to 66 residues: Large ribosomal subunit protein bL31 (66 aa).

Residues Cys16, Cys18, Cys36, and Cys39 each coordinate Zn(2+).

Belongs to the bacterial ribosomal protein bL31 family. Type A subfamily. Part of the 50S ribosomal subunit. The cofactor is Zn(2+).

Binds the 23S rRNA. This is Large ribosomal subunit protein bL31 from Anoxybacillus flavithermus (strain DSM 21510 / WK1).